The primary structure comprises 142 residues: Large ribosomal subunit protein uL11 (142 aa).

Belongs to the universal ribosomal protein uL11 family. In terms of assembly, part of the ribosomal stalk of the 50S ribosomal subunit. Interacts with L10 and the large rRNA to form the base of the stalk. L10 forms an elongated spine to which L12 dimers bind in a sequential fashion forming a multimeric L10(L12)X complex. In terms of processing, one or more lysine residues are methylated.

Its function is as follows. Forms part of the ribosomal stalk which helps the ribosome interact with GTP-bound translation factors. In Cronobacter sakazakii (strain ATCC BAA-894) (Enterobacter sakazakii), this protein is Large ribosomal subunit protein uL11.